The primary structure comprises 425 residues: Glutamate-1-semialdehyde 2,1-aminomutase (425 aa).

Residue lysine 264 is modified to N6-(pyridoxal phosphate)lysine.

Belongs to the class-III pyridoxal-phosphate-dependent aminotransferase family. HemL subfamily. Homodimer. Requires pyridoxal 5'-phosphate as cofactor.

It is found in the cytoplasm. It carries out the reaction (S)-4-amino-5-oxopentanoate = 5-aminolevulinate. The protein operates within porphyrin-containing compound metabolism; protoporphyrin-IX biosynthesis; 5-aminolevulinate from L-glutamyl-tRNA(Glu): step 2/2. This Leptospira biflexa serovar Patoc (strain Patoc 1 / Ames) protein is Glutamate-1-semialdehyde 2,1-aminomutase.